The following is a 443-amino-acid chain: Signal recognition particle 54 kDa protein (443 aa).

Residues 104–111 (GLQGSGKT), 184–188 (DTAGR), and 242–245 (TKLD) each bind GTP.

The protein belongs to the GTP-binding SRP family. SRP54 subfamily. As to quaternary structure, part of the signal recognition particle protein translocation system, which is composed of SRP and FtsY. Archaeal SRP consists of a 7S RNA molecule of 300 nucleotides and two protein subunits: SRP54 and SRP19.

The protein localises to the cytoplasm. It catalyses the reaction GTP + H2O = GDP + phosphate + H(+). Involved in targeting and insertion of nascent membrane proteins into the cytoplasmic membrane. Binds to the hydrophobic signal sequence of the ribosome-nascent chain (RNC) as it emerges from the ribosomes. The SRP-RNC complex is then targeted to the cytoplasmic membrane where it interacts with the SRP receptor FtsY. This chain is Signal recognition particle 54 kDa protein, found in Methanosarcina barkeri (strain Fusaro / DSM 804).